Consider the following 320-residue polypeptide: Acetyl-coenzyme A carboxylase carboxyl transferase subunit alpha (320 aa).

The CoA carboxyltransferase C-terminal domain maps to 33 to 294 (AFESEIQALR…GDAVEDELKA (262 aa)).

This sequence belongs to the AccA family. As to quaternary structure, acetyl-CoA carboxylase is a heterohexamer composed of biotin carboxyl carrier protein (AccB), biotin carboxylase (AccC) and two subunits each of ACCase subunit alpha (AccA) and ACCase subunit beta (AccD).

The protein resides in the cytoplasm. The enzyme catalyses N(6)-carboxybiotinyl-L-lysyl-[protein] + acetyl-CoA = N(6)-biotinyl-L-lysyl-[protein] + malonyl-CoA. It participates in lipid metabolism; malonyl-CoA biosynthesis; malonyl-CoA from acetyl-CoA: step 1/1. In terms of biological role, component of the acetyl coenzyme A carboxylase (ACC) complex. First, biotin carboxylase catalyzes the carboxylation of biotin on its carrier protein (BCCP) and then the CO(2) group is transferred by the carboxyltransferase to acetyl-CoA to form malonyl-CoA. The polypeptide is Acetyl-coenzyme A carboxylase carboxyl transferase subunit alpha (Caulobacter sp. (strain K31)).